The sequence spans 132 residues: Small ribosomal subunit protein uS8 (132 aa).

The protein belongs to the universal ribosomal protein uS8 family. Part of the 30S ribosomal subunit. Contacts proteins S5 and S12.

One of the primary rRNA binding proteins, it binds directly to 16S rRNA central domain where it helps coordinate assembly of the platform of the 30S subunit. The polypeptide is Small ribosomal subunit protein uS8 (Paramagnetospirillum magneticum (strain ATCC 700264 / AMB-1) (Magnetospirillum magneticum)).